The following is a 327-amino-acid chain: Microtubule-associated protein RP/EB family member 2 (327 aa).

Residues 1–17 (MPGPTQTLSPNGENNND) are compositionally biased toward polar residues. The interval 1–20 (MPGPTQTLSPNGENNNDVIH) is disordered. In terms of domain architecture, Calponin-homology (CH) spans 56–158 (TMSRHDIIAW…FIQWFKKFFD (103 aa)). 2 disordered regions span residues 170-238 (EARQ…DKDL) and 295-327 (LYSS…QEEY). One can recognise an EB1 C-terminal domain in the interval 234-304 (SDKDLETQVS…LYSSEEQESH (71 aa)).

It belongs to the MAPRE family.

It localises to the cytoplasm. The protein resides in the cytoskeleton. May be involved in microtubule polymerization, and spindle function by stabilizing microtubules and anchoring them at centrosomes. In Xenopus laevis (African clawed frog), this protein is Microtubule-associated protein RP/EB family member 2 (mapre2).